The following is a 259-amino-acid chain: Eukaryotic translation initiation factor 3 subunit G-2 (259 aa).

Positions 179–257 (SAVRISNLSE…LILSVEWSKP (79 aa)) constitute an RRM domain.

This sequence belongs to the eIF-3 subunit G family. In terms of assembly, component of the eukaryotic translation initiation factor 3 (eIF-3) complex. The eIF-3 complex interacts with pix.

Its subcellular location is the cytoplasm. RNA-binding component of the eukaryotic translation initiation factor 3 (eIF-3) complex, which is involved in protein synthesis of a specialized repertoire of mRNAs and, together with other initiation factors, stimulates binding of mRNA and methionyl-tRNAi to the 40S ribosome. The eIF-3 complex specifically targets and initiates translation of a subset of mRNAs involved in cell proliferation. This subunit can bind 18S rRNA. The chain is Eukaryotic translation initiation factor 3 subunit G-2 from Drosophila mojavensis (Fruit fly).